A 531-amino-acid chain; its full sequence is Fatty acid--[acyl-carrier-protein] ligase MmaC (531 aa).

Thr169 provides a ligand contact to Mg(2+). ATP-binding residues include Ile218, Val308, and Ser312. Residue Glu313 participates in Mg(2+) binding. Asp403 contacts ATP.

This sequence belongs to the ATP-dependent AMP-binding enzyme family. It depends on Mg(2+) as a cofactor.

The enzyme catalyses a (2E)-enoyl fatty acid + holo-[ACP] + ATP = a (2E)-enoyl-[ACP] + AMP + diphosphate. It catalyses the reaction a (2E)-enoyl fatty acid + ATP + H(+) = a (2E)-2-fatty-enoyl-AMP + diphosphate. It carries out the reaction a (2E)-2-fatty-enoyl-AMP + holo-[ACP] = a (2E)-enoyl-[ACP] + AMP + H(+). The catalysed reaction is (2E)-decenoate + holo-[ACP] + ATP = (2E)-decenoyl-[ACP] + AMP + diphosphate. The enzyme catalyses a (3R)-3-isocyanyl-fatty acid + holo-[ACP] + ATP = a (3R)-3-isocyanyl-fatty acyl-[ACP] + AMP + diphosphate. It catalyses the reaction a (3R)-3-isocyanyl-fatty acid + ATP + H(+) = a (3R)-3-isocyanyl-fatty acyl-AMP + diphosphate. It carries out the reaction a (3R)-3-isocyanyl-fatty acyl-AMP + holo-[ACP] = a (3R)-3-isocyanyl-fatty acyl-[ACP] + AMP + H(+). Functionally, acyl:acyl-carrier protein ligase involved in the biosynthesis of a unique class of isonitrile lipopeptides (INLPs) that seem to play a role in metal acquisition in M.marinum. Acts twice during the INLP pathway, catalyzing the activation of (2E)-2-decenoate as well as probably the corresponding (3R)-3-isocyanyl-fatty acid as acyl-adenylates (acyl-AMP), and then the acyl transfer to the dedicated acyl-carrier protein MmaB. The sequence is that of Fatty acid--[acyl-carrier-protein] ligase MmaC from Mycobacterium marinum (strain ATCC BAA-535 / M).